Here is a 259-residue protein sequence, read N- to C-terminus: AM-toxin biosynthesis protein 11 (259 aa).

Residues Arg-39–Thr-66 are disordered. Over residues Ile-50 to Cys-64 the composition is skewed to polar residues.

It participates in mycotoxin biosynthesis. In terms of biological role, part of the gene clusters that mediate the biosynthesis of AM-toxins, host-selective toxins (HSTs) causing Alternaria blotch on apple, a worldwide distributed disease. AM-toxins are cyclic depsipeptides containing the 3 residues 2-hydroxy-isovaleric acid (2-HIV), dehydroalanine, L-alanine which are common for all 3 AM-toxins I to III. The fourth precursor is L-alpha-amino-methoxyphenyl-valeric acid (L-Amv) for AM-toxin I, L-alpha-amino-phenyl-valeric acid (L-Apv) for AM-toxin II, and L-alpha-amino-hydroxyphenyl-valeric acid (L-Ahv) for AM-toxin III. AM-toxins have two target sites for affecting susceptible apple cells; they cause invagination of the plasma membrane and electrolyte loss and chloroplast disorganization. The non-ribosomal peptide synthetase AMT1 contains 4 catalytic modules and is responsible for activation of each residue in AM-toxin. The aldo-keto reductase AMT2 catalyzes the conversion of 2-keto-isovaleric acid (2-KIV) to 2-hydroxy-isovaleric acid (2-HIV), one of the precursor residues incorporated by AMT1 during AM-toxin biosynthesis, by reduction of its ketone to an alcohol. The cytochrome P450 monooxygenase AMT3 and the thioesterase AMT4 are also important for AM-toxin production, but their exact function within the AM-toxin biosynthesis are not known yet. Up to 21 proteins (including AMT1 to AMT4) are predicted to be involved in AM-toxin biosynthesis since their expression ishighly up-regulated in AM-toxin-producing cultures. The protein is AM-toxin biosynthesis protein 11 of Alternaria alternata (Alternaria rot fungus).